Here is a 493-residue protein sequence, read N- to C-terminus: Cobyric acid synthase (493 aa).

A GATase cobBQ-type domain is found at 255–441 (ELEIAVLRLP…LHGLLENGRW (187 aa)). Cys-336 serves as the catalytic Nucleophile. The active site involves His-433.

The protein belongs to the CobB/CobQ family. CobQ subfamily.

It functions in the pathway cofactor biosynthesis; adenosylcobalamin biosynthesis. Functionally, catalyzes amidations at positions B, D, E, and G on adenosylcobyrinic A,C-diamide. NH(2) groups are provided by glutamine, and one molecule of ATP is hydrogenolyzed for each amidation. This Synechococcus sp. (strain RCC307) protein is Cobyric acid synthase.